Here is a 90-residue protein sequence, read N- to C-terminus: DNA/RNA-binding protein Alba (90 aa).

N6-acetyllysine is present on K8.

Belongs to the histone-like Alba family. In terms of processing, acetylated. Acetylation at Lys-8 decreases DNA-binding affinity.

It is found in the cytoplasm. It localises to the chromosome. Binds double-stranded DNA tightly but without sequence specificity. Involved in DNA compaction. The protein is DNA/RNA-binding protein Alba of Nanoarchaeum equitans (strain Kin4-M).